Here is a 248-residue protein sequence, read N- to C-terminus: ATP synthase subunit a, chloroplastic (248 aa).

5 helical membrane-spanning segments follow: residues 38 to 58, 96 to 116, 135 to 155, 200 to 220, and 221 to 241; these read QVLI…TLAV, VPFI…GALF, INTT…AGFT, LVVA…VMFL, and GLFT…AYIG.

The protein belongs to the ATPase A chain family. In terms of assembly, F-type ATPases have 2 components, CF(1) - the catalytic core - and CF(0) - the membrane proton channel. CF(1) has five subunits: alpha(3), beta(3), gamma(1), delta(1), epsilon(1). CF(0) has four main subunits: a, b, b' and c.

The protein localises to the plastid. The protein resides in the chloroplast thylakoid membrane. In terms of biological role, key component of the proton channel; it plays a direct role in the translocation of protons across the membrane. The polypeptide is ATP synthase subunit a, chloroplastic (Cryptomeria japonica (Japanese cedar)).